Reading from the N-terminus, the 571-residue chain is Protein E6 homolog (571 aa).

The protein belongs to the chordopoxvirinae E6 family.

It is found in the virion. Functionally, late protein which may play a role in the virion morphogenesis and have therefore an indirect role on viral transcription ability. The protein is Protein E6 homolog of Vertebrata (FPV).